Here is a 387-residue protein sequence, read N- to C-terminus: UPF0400 protein C337.03 (387 aa).

The CID domain occupies 1–133 (MALTPDTVSS…SLQERFNNAE (133 aa)). A coiled-coil region spans residues 177-255 (KSYLEKQSDY…IISNLENKES (79 aa)). Positions 257–387 (TATSTLTDAG…SSAAGLYGDS (131 aa)) are disordered. The segment covering 283–297 (SPPSSSPNSDDAYSP) has biased composition (low complexity). Over residues 298-323 (QVDSYSPSINSVPYTSNIVENPSEDN) the composition is skewed to polar residues. A compositionally biased stretch (acidic residues) spans 353–365 (NEEESKELPEDSD). A compositionally biased stretch (low complexity) spans 370–379 (DSSPSSDDSS). Position 372 is a phosphoserine (serine 372).

This sequence belongs to the UPF0400 (RTT103) family.

In Schizosaccharomyces pombe (strain 972 / ATCC 24843) (Fission yeast), this protein is UPF0400 protein C337.03.